A 112-amino-acid chain; its full sequence is MKRKYILKKNWEFQKIIDSKKQFIFPTIILYYKKSDSFQIGISIPKKFAIAVKRNYLKRQIKSILDQIRPYNLSYEMILIVRKNYLNLNFLQKQQEIKKIIERISNGKEKIK.

Belongs to the RnpA family. In terms of assembly, consists of a catalytic RNA component (M1 or rnpB) and a protein subunit.

The enzyme catalyses Endonucleolytic cleavage of RNA, removing 5'-extranucleotides from tRNA precursor.. Functionally, RNaseP catalyzes the removal of the 5'-leader sequence from pre-tRNA to produce the mature 5'-terminus. It can also cleave other RNA substrates such as 4.5S RNA. The protein component plays an auxiliary but essential role in vivo by binding to the 5'-leader sequence and broadening the substrate specificity of the ribozyme. This chain is Ribonuclease P protein component, found in Mycoplasma mobile (strain ATCC 43663 / 163K / NCTC 11711) (Mesomycoplasma mobile).